The following is a 607-amino-acid chain: CRISPR-associated DNA-binding protein Cas12m (607 aa).

The interval 1–16 is wedge domain (WED-N); that stretch reads MTRVTVQTAGVHYKWQ. The segment at 17–189 is recognition domain (REC); it reads MPDQLTQQLR…QLRHHRWDGT (173 aa). Residues 50 to 124 are roof in REC; the sequence is WSSYPAVAAL…IASVRDEATE (75 aa). Residues 74-83 show a composition bias toward basic and acidic residues; sequence ASTVKEEKSR. Residues 74–94 form a disordered region; the sequence is ASTVKEEKSRQRTKRPSHPAV. The segment at 190–315 is wedge domain (WED-C); sequence GTISVQLQRQ…KIPDQGEVDE (126 aa). A ruvC-I region spans residues 316 to 559; sequence GPTIAVHLGW…TVSHTGLSRV (244 aa). Residues 391–452 form a ruvC insertion region; the sequence is SIRDTLVAWL…EGADIAETLE (62 aa). The tract at residues 552–588 is target nucleic-acid binding (TNB); sequence SHTGLSRVHAACGHENPADDRYLMQPVLCDGCGRTYD. Residues His-560, Cys-563, Cys-580, and Cys-583 each contribute to the Zn(2+) site. The interval 589 to 607 is ruvC-II; the sequence is TDLSATILMLQRASAATSN. A Mg(2+)-binding site is contributed by Asp-590.

This sequence belongs to the CRISPR-associated DNA-binding protein Cas12m family. Binds crRNA and target dsDNA as a monomer. Mg(2+) serves as cofactor. It depends on Zn(2+) as a cofactor.

Its function is as follows. CRISPR (clustered regularly interspaced short palindromic repeat), is an adaptive immune system that provides protection against mobile genetic elements (viruses, transposable elements and conjugative plasmids). CRISPR clusters contain sequences complementary to antecedent mobile elements and target invading nucleic acids. CRISPR clusters are transcribed and processed into CRISPR RNA (crRNA). Recognizes a short motif in the CRISPR repeat sequences (the 5' PAM or protospacer adjacent motif, 5'-TTN-3' in this organism) to help distinguish self versus nonself, as targets within the bacterial CRISPR locus do not have PAMs. Upon expression in E.coli as a CRISPR locus inhibits plasmid propagation when targeted to regions essential for plasmid propagation (replication origin and a selectable marker); inhibits expression of a non-selectable marker, probably at the transcriptional level. Protects E.coli against bacteriophage M13mp18, to a lesser extent against lambda and VpaE1 as well as phage T4 with hydroxymethyl or unmodified (but not glycosylated) cytosines. Preferentially binds to its associated crRNA. Cas12m-crRNA binds DNA in a PAM-dependent, crRNA-guided fashion. Binds a 20-bp crRNA-ss-target DNA heteroduplex, in a 52 nucleotide crRNA. No dsDNA, ssDNA or RNA nuclease activity is seen for the crRNA-Cas12m complex. Probably required for pre-crRNA processing to mature crRNA. The chain is CRISPR-associated DNA-binding protein Cas12m from Gordonia otitidis (strain DSM 44809 / CCUG 52243 / JCM 12355 / NBRC 100426 / IFM 10032).